A 97-amino-acid polypeptide reads, in one-letter code: Large ribosomal subunit protein uL23 (97 aa).

This sequence belongs to the universal ribosomal protein uL23 family. Part of the 50S ribosomal subunit. Contacts protein L29, and trigger factor when it is bound to the ribosome.

Its function is as follows. One of the early assembly proteins it binds 23S rRNA. One of the proteins that surrounds the polypeptide exit tunnel on the outside of the ribosome. Forms the main docking site for trigger factor binding to the ribosome. This Rhizobium rhizogenes (strain K84 / ATCC BAA-868) (Agrobacterium radiobacter) protein is Large ribosomal subunit protein uL23.